The primary structure comprises 236 residues: 2,3,4,5-tetrahydropyridine-2,6-dicarboxylate N-acetyltransferase (236 aa).

Belongs to the transferase hexapeptide repeat family. DapH subfamily.

The enzyme catalyses (S)-2,3,4,5-tetrahydrodipicolinate + acetyl-CoA + H2O = L-2-acetamido-6-oxoheptanedioate + CoA. Its pathway is amino-acid biosynthesis; L-lysine biosynthesis via DAP pathway; LL-2,6-diaminopimelate from (S)-tetrahydrodipicolinate (acetylase route): step 1/3. Functionally, catalyzes the transfer of an acetyl group from acetyl-CoA to tetrahydrodipicolinate. The sequence is that of 2,3,4,5-tetrahydropyridine-2,6-dicarboxylate N-acetyltransferase from Bacillus pumilus (strain SAFR-032).